The sequence spans 332 residues: Ketol-acid reductoisomerase (NADP(+)) (332 aa).

A KARI N-terminal Rossmann domain is found at M1 to T182. NADP(+) is bound by residues Y25 to Q28, K49, S51, and D83 to Q86. Residue H108 is part of the active site. G134 lines the NADP(+) pocket. One can recognise a KARI C-terminal knotted domain in the interval T183–L328. Residues D191, E195, E227, and E231 each coordinate Mg(2+). S252 serves as a coordination point for substrate.

This sequence belongs to the ketol-acid reductoisomerase family. Mg(2+) serves as cofactor.

It carries out the reaction (2R)-2,3-dihydroxy-3-methylbutanoate + NADP(+) = (2S)-2-acetolactate + NADPH + H(+). The catalysed reaction is (2R,3R)-2,3-dihydroxy-3-methylpentanoate + NADP(+) = (S)-2-ethyl-2-hydroxy-3-oxobutanoate + NADPH + H(+). It functions in the pathway amino-acid biosynthesis; L-isoleucine biosynthesis; L-isoleucine from 2-oxobutanoate: step 2/4. The protein operates within amino-acid biosynthesis; L-valine biosynthesis; L-valine from pyruvate: step 2/4. Involved in the biosynthesis of branched-chain amino acids (BCAA). Catalyzes an alkyl-migration followed by a ketol-acid reduction of (S)-2-acetolactate (S2AL) to yield (R)-2,3-dihydroxy-isovalerate. In the isomerase reaction, S2AL is rearranged via a Mg-dependent methyl migration to produce 3-hydroxy-3-methyl-2-ketobutyrate (HMKB). In the reductase reaction, this 2-ketoacid undergoes a metal-dependent reduction by NADPH to yield (R)-2,3-dihydroxy-isovalerate. In Methanothrix thermoacetophila (strain DSM 6194 / JCM 14653 / NBRC 101360 / PT) (Methanosaeta thermophila), this protein is Ketol-acid reductoisomerase (NADP(+)).